We begin with the raw amino-acid sequence, 317 residues long: uncharacterized protein (317 aa).

The HTH lysR-type domain occupies 29–86 (IDLNLLTIFEAVYVHKGIVNAAKVLNLTPSAISQSIQKLRVIFPDPLFIRKGQGVTPT). Positions 46-65 (IVNAAKVLNLTPSAISQSIQ) form a DNA-binding region, H-T-H motif.

The protein belongs to the LysR transcriptional regulatory family.

This is an uncharacterized protein from Escherichia coli (strain K12).